Reading from the N-terminus, the 123-residue chain is Small ribosomal subunit protein uS12cz/uS12cy (123 aa).

The protein belongs to the universal ribosomal protein uS12 family. As to quaternary structure, part of the 30S ribosomal subunit.

It localises to the plastid. The protein localises to the chloroplast. In terms of biological role, with S4 and S5 plays an important role in translational accuracy. Located at the interface of the 30S and 50S subunits. The polypeptide is Small ribosomal subunit protein uS12cz/uS12cy (rps12-A) (Nandina domestica (Heavenly bamboo)).